The chain runs to 251 residues: Probable phosphatase Sputw3181_2734 (251 aa).

9 residues coordinate Zn(2+): H8, H10, H16, H41, E74, H102, H132, D193, and H195.

The protein belongs to the PHP family. Zn(2+) is required as a cofactor.

The chain is Probable phosphatase Sputw3181_2734 from Shewanella sp. (strain W3-18-1).